Reading from the N-terminus, the 336-residue chain is Carbamoyl dehydratase HypE (336 aa).

Position 336 is an S-carbamoylcysteine; by HypF; alternate (cysteine 336). At cysteine 336 the chain carries S-cyanocysteine; by autocatalysis; alternate.

This sequence belongs to the HypE family. In terms of assembly, homodimer. Forms a complex with HypF. Also forms a complex with HypC, or HybG, and HypD. In terms of processing, modified by HypF, which adds a carboxamido group to the thiolate of the C-terminal cysteine, yielding a protein-S-carboxamide. The carboxamido group is then dehydrated by HypE itself to yield a protein-thiocyanate.

The catalysed reaction is C-terminal S-carboxamide-L-cysteinyl-[HypE protein] + ATP = C-terminal S-cyanate-L-cysteinyl-[HypE protein] + ADP + phosphate + H(+). It participates in protein modification; [NiFe] hydrogenase maturation. Involved in the maturation of [NiFe] hydrogenases. Along with HypF, it catalyzes the synthesis of the CN ligands of the active site iron of [NiFe]-hydrogenases. HypE catalyzes the ATP-dependent dehydration of the carboxamido group attached to its C-terminal cysteine to a cyano group. The cyano group is then transferred from HypE to the HypC-HypD complex or the HybG-HypD complex. This Escherichia coli (strain K12) protein is Carbamoyl dehydratase HypE.